A 336-amino-acid polypeptide reads, in one-letter code: Anthranilate phosphoribosyltransferase (336 aa).

5-phospho-alpha-D-ribose 1-diphosphate-binding positions include Gly-82, Gly-85–Asp-86, Thr-90, Asn-92–Thr-95, Lys-110–Ser-118, and Ser-122. An anthranilate-binding site is contributed by Gly-82. Residue Ser-94 participates in Mg(2+) binding. Asn-113 lines the anthranilate pocket. An anthranilate-binding site is contributed by Arg-168. The Mg(2+) site is built by Asp-227 and Glu-228.

This sequence belongs to the anthranilate phosphoribosyltransferase family. As to quaternary structure, homodimer. Mg(2+) is required as a cofactor.

It catalyses the reaction N-(5-phospho-beta-D-ribosyl)anthranilate + diphosphate = 5-phospho-alpha-D-ribose 1-diphosphate + anthranilate. It participates in amino-acid biosynthesis; L-tryptophan biosynthesis; L-tryptophan from chorismate: step 2/5. Functionally, catalyzes the transfer of the phosphoribosyl group of 5-phosphorylribose-1-pyrophosphate (PRPP) to anthranilate to yield N-(5'-phosphoribosyl)-anthranilate (PRA). This Leptospira interrogans serogroup Icterohaemorrhagiae serovar Lai (strain 56601) protein is Anthranilate phosphoribosyltransferase.